The chain runs to 604 residues: Sulfite reductase [NADPH] flavoprotein alpha-component (604 aa).

One can recognise a Flavodoxin-like domain in the interval 68-206; that stretch reads LSIIFASQTG…PAAEWRKQAL (139 aa). FMN contacts are provided by residues 74-79, 121-124, and 157-166; these read SQTGNA, STNG, and LGDSSYEFFC. Residues 239 to 453 enclose the FAD-binding FR-type domain; that stretch reads QNPYTATLLT…VEHNNNFKLP (215 aa). FAD contacts are provided by residues T327, G361, 391–394, 409–411, Y415, and 424–427; these read RLYS, TVG, and GGAS. NADP(+) is bound by residues 524 to 525, 530 to 534, and D566; these read SR and KVYVQ. Y604 is an FAD binding site.

It belongs to the NADPH-dependent sulphite reductase flavoprotein subunit CysJ family. This sequence in the N-terminal section; belongs to the flavodoxin family. The protein in the C-terminal section; belongs to the flavoprotein pyridine nucleotide cytochrome reductase family. As to quaternary structure, alpha(8)-beta(8). The alpha component is a flavoprotein, the beta component is a hemoprotein. FAD is required as a cofactor. The cofactor is FMN.

It catalyses the reaction hydrogen sulfide + 3 NADP(+) + 3 H2O = sulfite + 3 NADPH + 4 H(+). The protein operates within sulfur metabolism; hydrogen sulfide biosynthesis; hydrogen sulfide from sulfite (NADPH route): step 1/1. Component of the sulfite reductase complex that catalyzes the 6-electron reduction of sulfite to sulfide. This is one of several activities required for the biosynthesis of L-cysteine from sulfate. The flavoprotein component catalyzes the electron flow from NADPH -&gt; FAD -&gt; FMN to the hemoprotein component. This chain is Sulfite reductase [NADPH] flavoprotein alpha-component, found in Aliivibrio fischeri (strain ATCC 700601 / ES114) (Vibrio fischeri).